The sequence spans 116 residues: Probable prefoldin subunit 2 (116 aa).

It belongs to the prefoldin subunit beta family. As to quaternary structure, heterohexamer of two PFD-alpha type and four PFD-beta type subunits.

In terms of biological role, binds specifically to cytosolic chaperonin (c-CPN) and transfers target proteins to it. Binds to nascent polypeptide chain and promotes folding in an environment in which there are many competing pathways for nonnative proteins. The protein is Probable prefoldin subunit 2 (pfdn2) of Dictyostelium discoideum (Social amoeba).